Consider the following 233-residue polypeptide: Ras-related protein RABA6a (233 aa).

Residue 20–27 (GDSAVGKS) coordinates GTP. Positions 42–50 (SKPTIGVEF) match the Effector region motif. GTP contacts are provided by residues 68-72 (DTAGQ), 126-129 (NKSD), and 156-157 (SA). S-geranylgeranyl cysteine attachment occurs at residues Cys-230 and Cys-231.

Belongs to the small GTPase superfamily. Rab family.

The protein localises to the cell membrane. Its function is as follows. Intracellular vesicle trafficking and protein transport. The protein is Ras-related protein RABA6a (RABA6A) of Arabidopsis thaliana (Mouse-ear cress).